The sequence spans 88 residues: Carboxysome shell vertex protein CsoS4A (88 aa).

Residues Met1–Asp76 enclose the BMV domain.

This sequence belongs to the CcmL/EutN family. CsoS4 subfamily. As to quaternary structure, homopentamer.

It is found in the carboxysome. Probably forms vertices in the carboxysome, a polyhedral inclusion where RuBisCO (ribulose bisphosphate carboxylase, cbbL-cbbS) is sequestered. Has been modeled to induce curvature upon insertion into an otherwise flat hexagonal layer of major carboxysome subunits. Has not been identified in purified carboxysomes; it is expected to be present in very low amounts. This chain is Carboxysome shell vertex protein CsoS4A, found in Prochlorococcus marinus subsp. pastoris (strain CCMP1986 / NIES-2087 / MED4).